We begin with the raw amino-acid sequence, 726 residues long: Catalase-peroxidase (726 aa).

Positions 1–33 are disordered; that stretch reads MSTSDDIHNTTATGKCPFHQGGHDQSAGAGTTT. Positions 105–226 form a cross-link, tryptophyl-tyrosyl-methioninium (Trp-Tyr) (with M-252); sequence WHGAGTYRSI…LGATEMGLIY (122 aa). The active-site Proton acceptor is His-106. Positions 226–252 form a cross-link, tryptophyl-tyrosyl-methioninium (Tyr-Met) (with W-105); the sequence is YVNPEGPDHSGEPLSAAAAIRATFGNM. His-267 provides a ligand contact to heme b.

This sequence belongs to the peroxidase family. Peroxidase/catalase subfamily. Homodimer or homotetramer. The cofactor is heme b. Post-translationally, formation of the three residue Trp-Tyr-Met cross-link is important for the catalase, but not the peroxidase activity of the enzyme.

It carries out the reaction H2O2 + AH2 = A + 2 H2O. It catalyses the reaction 2 H2O2 = O2 + 2 H2O. In terms of biological role, bifunctional enzyme with both catalase and broad-spectrum peroxidase activity. The sequence is that of Catalase-peroxidase from Escherichia coli (strain K12 / DH10B).